The chain runs to 256 residues: Enolase-phosphatase E1 (256 aa).

2 residues coordinate Mg(2+): Asp-14 and Glu-16. Substrate contacts are provided by residues 142 to 143 and Lys-176; that span reads SS. Asp-201 provides a ligand contact to Mg(2+).

Belongs to the HAD-like hydrolase superfamily. MasA/MtnC family. Monomer. It depends on Mg(2+) as a cofactor.

The protein resides in the cytoplasm. Its subcellular location is the nucleus. The catalysed reaction is 5-methylsulfanyl-2,3-dioxopentyl phosphate + H2O = 1,2-dihydroxy-5-(methylsulfanyl)pent-1-en-3-one + phosphate. The protein operates within amino-acid biosynthesis; L-methionine biosynthesis via salvage pathway; L-methionine from S-methyl-5-thio-alpha-D-ribose 1-phosphate: step 3/6. It functions in the pathway amino-acid biosynthesis; L-methionine biosynthesis via salvage pathway; L-methionine from S-methyl-5-thio-alpha-D-ribose 1-phosphate: step 4/6. Functionally, bifunctional enzyme that catalyzes the enolization of 2,3-diketo-5-methylthiopentyl-1-phosphate (DK-MTP-1-P) into the intermediate 2-hydroxy-3-keto-5-methylthiopentenyl-1-phosphate (HK-MTPenyl-1-P), which is then dephosphorylated to form the acireductone 1,2-dihydroxy-3-keto-5-methylthiopentene (DHK-MTPene). This chain is Enolase-phosphatase E1, found in Drosophila yakuba (Fruit fly).